The primary structure comprises 652 residues: DNA ligase (652 aa).

NAD(+)-binding positions include 29 to 33 (DSDYD), 78 to 79 (SL), and E107. K109 acts as the N6-AMP-lysine intermediate in catalysis. NAD(+) is bound by residues R130, E164, K278, and K302. Residues C395, C398, C413, and C418 each contribute to the Zn(2+) site. The BRCT domain occupies 577–652 (NSDAALFGLT…IEDEDWLRQL (76 aa)).

The protein belongs to the NAD-dependent DNA ligase family. LigA subfamily. Requires Mg(2+) as cofactor. Mn(2+) serves as cofactor.

The catalysed reaction is NAD(+) + (deoxyribonucleotide)n-3'-hydroxyl + 5'-phospho-(deoxyribonucleotide)m = (deoxyribonucleotide)n+m + AMP + beta-nicotinamide D-nucleotide.. DNA ligase that catalyzes the formation of phosphodiester linkages between 5'-phosphoryl and 3'-hydroxyl groups in double-stranded DNA using NAD as a coenzyme and as the energy source for the reaction. It is essential for DNA replication and repair of damaged DNA. The protein is DNA ligase of Streptococcus pyogenes serotype M3 (strain ATCC BAA-595 / MGAS315).